A 6874-amino-acid polypeptide reads, in one-letter code: Nesprin-2 (6874 aa).

The segment at 1–286 is actin-binding; that stretch reads MAASPVLPTE…MTYVAQFLKY (286 aa). Residues 1-6823 are Cytoplasmic-facing; sequence MAASPVLPTE…RRSFLSRVIR (6823 aa). 2 consecutive Calponin-homology (CH) domains span residues 31–136 and 183–288; these read DTQK…LHFH and WSAK…KYSK. Spectrin repeat units lie at residues 299–380, 381–474, 475–577, and 578–680; these read AKVR…HQVA, AWRA…RINN, VLGK…QYIH, and NTKA…IQDQ. A coiled-coil region spans residues 299–6767; that stretch reads AKVRDALVWL…PDASLTSFDE (6469 aa). Positions 675-723 are disordered; it reads VKIQDQPPGNSSGTSLSKESAMAAEPGGSRGEDVKAAEKQEVEDEESAG. The span at 681-692 shows a compositional bias: polar residues; the sequence is PPGNSSGTSLSK. Basic and acidic residues predominate over residues 704–714; the sequence is RGEDVKAAEKQ. Spectrin repeat units follow at residues 727–834, 835–928, 929–1030, 1120–1211, 1262–1322, 1323–1409, 1410–1514, 1515–1626, 1627–1728, 1729–1820, 1821–1928, 1929–2026, 2027–2122, 2123–2233, 2234–2350, 2422–2503, 2504–2610, 2611–2707, 2708–2821, 2822–2923, 2924–3027, 3028–3133, 3134–3239, 3240–3343, 3344–3456, 3457–3563, 3564–3669, 3670–3767, 3768–3870, 3871–3976, and 3977–4074; these read VNEE…KNLS, DEPL…LRHE, ISLY…KCAS, TQRG…LLNT, DIRD…DALD, ALEG…QSKE, EGPP…ASVT, ESLE…KTEE, YGEN…AGGS, NSYA…TKKN, ALQD…AGEL, NNSF…EEED, KLPA…LANT, YLSH…SVQK, LEGH…LNSI, DERE…TLKK, TKER…KCFQ, QATE…EALE, PLNR…QLEL, KLEE…FLQN, NGSE…GKIK, QLDT…NMLL, ELQP…SLRA, DVLN…AQEA, EEER…QWGG, ELKR…TTRK, NKDL…SSEV, SKSS…ESRT, SQLN…QIME, ALPH…VTQE, and QNEL…KPSA. The disordered stretch occupies residues 2338–2397; sequence SAKQETENGLNSILKSKSSTEKHVKFSLPVEEMPATSEVPKPTRESAAVGESGGARETNT. Over residues 2344-2354 the composition is skewed to polar residues; the sequence is ENGLNSILKSK. Disordered regions lie at residues 4062–4152, 4171–4193, 4326–4348, and 4401–4429; these read KQEQ…ATIV, APDS…TDEG, FSED…DQPA, and HQEN…DSTL. A compositionally biased stretch (basic and acidic residues) spans 4081–4091; it reads VAERDASERKL. At S4096 the chain carries Phosphoserine. Residues 4110–4122 show a composition bias toward basic and acidic residues; that stretch reads SSVKSEDGRRRTE. The Spectrin 36 repeat unit spans residues 4218-4337; sequence RSRPRPADIL…EDQHPSTLKK (120 aa). Residues 4326 to 4345 are compositionally biased toward basic and acidic residues; sequence FSEDQHPSTLKKPSEPHDVD. A compositionally biased stretch (polar residues) spans 4409-4429; sequence RQSASSSKVPSPGNAASDSTL. Spectrin repeat units lie at residues 4507–4626, 4627–4714, 4715–4823, 4824–4929, 4930–5037, 5038–5150, 5151–5252, 5253–5377, 5378–5473, 5474–5576, 5577–5691, 5692–5786, 5787–5894, 5895–6004, 6005–6122, 6123–6230, and 6231–6342; these read SMTE…RSYQ, NEVK…RARY, LELS…QSML, QKWE…QTLL, KHLL…QEKL, HQLQ…KIQH, LEQL…SQVH, QLRA…KAPH, NAHA…MLLA, KSNE…YSEL, QGNG…QWRF, FTTS…LSLG, EVIS…RVAI, RKQE…VKKL, KETF…EETW, RLWQ…LRYF, and TNQR…PGLD. The segment at 5435–5459 is disordered; the sequence is NSTLSDQLPQPEERSTPGLHSGQRH. Phosphoserine is present on S5772. The tract at residues 6336-6473 is disordered; the sequence is SHTPGLDDEK…TEAPVPTDAS (138 aa). Acidic residues predominate over residues 6341–6354; the sequence is LDDEKEASENETDI. S6348, S6371, S6400, S6417, S6418, S6419, and S6448 each carry phosphoserine. A compositionally biased stretch (basic and acidic residues) spans 6355–6372; sequence EDPREIQADSWRKRRESE. Spectrin repeat units lie at residues 6450–6534, 6535–6650, and 6651–6767; these read SHSK…KLRL, KQTV…QCQD, and FHQL…SFDE. The segment at 6790–6812 is disordered; it reads EEEEEEEETDSRMPHLDSPGSSQ. In terms of domain architecture, KASH spans 6815 to 6874; the sequence is RSFLSRVIRAALPLQLLLLLLLLLACLLPASEDDYSCTQANNFARSFYPMLRYTNGPPPT. The helical; Anchor for type IV membrane protein transmembrane segment at 6824–6844 threads the bilayer; that stretch reads AALPLQLLLLLLLLLACLLPA. Topologically, residues 6845–6874 are perinuclear space; it reads SEDDYSCTQANNFARSFYPMLRYTNGPPPT. The segment at 6861-6874 is sufficient for interaction with SUN2; it reads FYPMLRYTNGPPPT.

Belongs to the nesprin family. Core component of LINC complexes which are composed of inner nuclear membrane SUN domain-containing proteins coupled to outer nuclear membrane KASH domain-containing nesprins. SUN and KASH domain-containing proteins seem to bind each other promiscuously; however, some LINC complex constituents are tissue- or cell type-specific. At least SUN1/2-containing core LINC complexes are proposed to be hexameric composed of three protomers of each KASH and SUN domain-containing protein. The SUN2:SYNE2/KASH2 complex is a heterohexamer; the homotrimeric cloverleave-like conformation of the SUN domain is a prerequisite for LINC complex formation in which three separate SYNE2/KASH2 peptides bind at the interface of adjacent SUN domains. Interacts with EMD, LMNA, MKS3 and F-actin via its N-terminal domain. Interacts with DCTN1 and DYNC1I1/2; suggesting the association with the dynein-dynactin motor complex. Associates with kinesin motor complexes. Interacts with TMEM67. Interacts (via KASH domain) with TMEM258. Interacts with BROX; this interaction promotes SYN2 ubiquitination and facilitates the relaxation of mechanical stress imposed by compressive actin fibers at the rupture site. In terms of processing, the disulfid bond with SUN2 is required for stability of the SUN2:SYNE2/KASH2 LINC complex under tensile forces though not required for the interaction. C-terminal isoforms are highly expressed in the brain, hert and skeletal muscle. Isoform 1 (Nesprin-2 Giant) is most prevalent in the brain, skin, kidney and skeletal muscle.

It localises to the nucleus outer membrane. Its subcellular location is the sarcoplasmic reticulum membrane. It is found in the cell membrane. The protein localises to the cytoplasm. The protein resides in the cytoskeleton. It localises to the mitochondrion. Its subcellular location is the nucleus. It is found in the nucleoplasm. Multi-isomeric modular protein which forms a linking network between organelles and the actin cytoskeleton to maintain the subcellular spatial organization. As a component of the LINC (LInker of Nucleoskeleton and Cytoskeleton) complex involved in the connection between the nuclear lamina and the cytoskeleton. The nucleocytoplasmic interactions established by the LINC complex play an important role in the transmission of mechanical forces across the nuclear envelope and in nuclear movement and positioning. Specifically, SYNE2 and SUN2 assemble in arrays of transmembrane actin-associated nuclear (TAN) lines which are bound to F-actin cables and couple the nucleus to retrograde actin flow during actin-dependent nuclear movement. May be involved in nucleus-centrosome attachment. During interkinetic nuclear migration (INM) at G2 phase and nuclear migration in neural progenitors its LINC complex association with SUN1/2 and probable association with cytoplasmic dynein-dynactin motor complexes functions to pull the nucleus toward the centrosome; SYNE1 and SYNE2 seem to act redundantly in cerebellum, midbrain, brain stem, and other brain regions except cerebral cortex and hippocampus. During INM at G1 phase mediates respective LINC complex association with kinesin to push the nucleus away from the centrosome. Involved in nuclear migration in retinal photoreceptor progenitors. Required for centrosome migration to the apical cell surface during early ciliogenesis. This chain is Nesprin-2, found in Mus musculus (Mouse).